The sequence spans 471 residues: Glutamate--tRNA ligase (471 aa).

Positions 9-19 (PSPTGFLHVGG) match the 'HIGH' region motif. Zn(2+) contacts are provided by Cys98, Cys100, Cys125, and Asp127. A 'KMSKS' region motif is present at residues 237-241 (KLSKR). Position 240 (Lys240) interacts with ATP.

It belongs to the class-I aminoacyl-tRNA synthetase family. Glutamate--tRNA ligase type 1 subfamily. As to quaternary structure, monomer. Zn(2+) serves as cofactor.

It is found in the cytoplasm. It carries out the reaction tRNA(Glu) + L-glutamate + ATP = L-glutamyl-tRNA(Glu) + AMP + diphosphate. In terms of biological role, catalyzes the attachment of glutamate to tRNA(Glu) in a two-step reaction: glutamate is first activated by ATP to form Glu-AMP and then transferred to the acceptor end of tRNA(Glu). The sequence is that of Glutamate--tRNA ligase from Aeromonas hydrophila subsp. hydrophila (strain ATCC 7966 / DSM 30187 / BCRC 13018 / CCUG 14551 / JCM 1027 / KCTC 2358 / NCIMB 9240 / NCTC 8049).